The chain runs to 119 residues: uncharacterized protein (119 aa).

The next 2 helical transmembrane spans lie at 7–27 and 32–52; these read ILHN…LLLV and YFFE…FLML.

The protein localises to the membrane. This is an uncharacterized protein from Saccharomyces cerevisiae (strain ATCC 204508 / S288c) (Baker's yeast).